A 294-amino-acid chain; its full sequence is Eukaryotic translation initiation factor 3 subunit G (294 aa).

The span at 1-22 shows a compositional bias: basic and acidic residues; the sequence is MQTFHHQDTGSEDFRQNTMDEK. 2 disordered regions span residues 1-42 and 164-211; these read MQTF…DGTK and GGMG…SDDD. Residues 30-42 are compositionally biased toward polar residues; sequence STPQITQNADGTK. A compositionally biased stretch (gly residues) spans 193-205; sequence GPGGPGGPGGAAG. The 79-residue stretch at 214 to 292 folds into the RRM domain; the sequence is LTLRVTNLSE…LIMKVDYSKK (79 aa).

Belongs to the eIF-3 subunit G family. As to quaternary structure, component of the eukaryotic translation initiation factor 3 (eIF-3) complex.

It is found in the cytoplasm. Its function is as follows. RNA-binding component of the eukaryotic translation initiation factor 3 (eIF-3) complex, which is involved in protein synthesis of a specialized repertoire of mRNAs and, together with other initiation factors, stimulates binding of mRNA and methionyl-tRNAi to the 40S ribosome. The eIF-3 complex specifically targets and initiates translation of a subset of mRNAs involved in cell proliferation. This subunit can bind 18S rRNA. The sequence is that of Eukaryotic translation initiation factor 3 subunit G from Yarrowia lipolytica (strain CLIB 122 / E 150) (Yeast).